The following is a 349-amino-acid chain: DNA replication and repair protein RecF (349 aa).

ATP is bound at residue 29 to 36; the sequence is GLNGVGKT.

The protein belongs to the RecF family.

Its subcellular location is the cytoplasm. Its function is as follows. The RecF protein is involved in DNA metabolism; it is required for DNA replication and normal SOS inducibility. RecF binds preferentially to single-stranded, linear DNA. It also seems to bind ATP. In Acholeplasma laidlawii (strain PG-8A), this protein is DNA replication and repair protein RecF.